The primary structure comprises 292 residues: 4-hydroxy-tetrahydrodipicolinate synthase (292 aa).

A pyruvate-binding site is contributed by threonine 45. The Proton donor/acceptor role is filled by tyrosine 133. Lysine 161 (schiff-base intermediate with substrate) is an active-site residue. Isoleucine 203 contributes to the pyruvate binding site.

This sequence belongs to the DapA family. Homotetramer; dimer of dimers.

The protein localises to the cytoplasm. It carries out the reaction L-aspartate 4-semialdehyde + pyruvate = (2S,4S)-4-hydroxy-2,3,4,5-tetrahydrodipicolinate + H2O + H(+). Its pathway is amino-acid biosynthesis; L-lysine biosynthesis via DAP pathway; (S)-tetrahydrodipicolinate from L-aspartate: step 3/4. In terms of biological role, catalyzes the condensation of (S)-aspartate-beta-semialdehyde [(S)-ASA] and pyruvate to 4-hydroxy-tetrahydrodipicolinate (HTPA). The chain is 4-hydroxy-tetrahydrodipicolinate synthase from Nitrosococcus oceani (strain ATCC 19707 / BCRC 17464 / JCM 30415 / NCIMB 11848 / C-107).